Here is a 452-residue protein sequence, read N- to C-terminus: Tryptophan biosynthesis protein TrpCF (452 aa).

The tract at residues 1 to 256 is indole-3-glycerol phosphate synthase; it reads MQTVLAKIVA…AAVRRVLLGE (256 aa). The segment at 257 to 452 is N-(5'-phosphoribosyl)anthranilate isomerase; sequence NKVCGLTRAQ…ASVFQTLRAY (196 aa).

This sequence in the N-terminal section; belongs to the TrpC family. The protein in the C-terminal section; belongs to the TrpF family. In terms of assembly, monomer.

It catalyses the reaction N-(5-phospho-beta-D-ribosyl)anthranilate = 1-(2-carboxyphenylamino)-1-deoxy-D-ribulose 5-phosphate. It carries out the reaction 1-(2-carboxyphenylamino)-1-deoxy-D-ribulose 5-phosphate + H(+) = (1S,2R)-1-C-(indol-3-yl)glycerol 3-phosphate + CO2 + H2O. It functions in the pathway amino-acid biosynthesis; L-tryptophan biosynthesis; L-tryptophan from chorismate: step 3/5. Its pathway is amino-acid biosynthesis; L-tryptophan biosynthesis; L-tryptophan from chorismate: step 4/5. Its function is as follows. Bifunctional enzyme that catalyzes two sequential steps of tryptophan biosynthetic pathway. The first reaction is catalyzed by the isomerase, coded by the TrpF domain; the second reaction is catalyzed by the synthase, coded by the TrpC domain. This Salmonella typhimurium (strain LT2 / SGSC1412 / ATCC 700720) protein is Tryptophan biosynthesis protein TrpCF (trpC).